A 400-amino-acid chain; its full sequence is uncharacterized protein (400 aa).

Positions M1–A23 are cleaved as a signal peptide.

This is an uncharacterized protein from Archaeoglobus fulgidus (strain ATCC 49558 / DSM 4304 / JCM 9628 / NBRC 100126 / VC-16).